Consider the following 548-residue polypeptide: Thermostable neutral protease NprT (548 aa).

The first 25 residues, 1–25 (MNKRAMLGAIGLAFGLLAAPIGASA), serve as a signal peptide directing secretion. The propeptide at 26-229 (KGESIVWNEQ…DSRQPGGGQP (204 aa)) is activation peptide. Asp-289, Asp-291, Gln-293, and Asp-370 together coordinate Ca(2+). Zn(2+) is bound at residue His-374. The active site involves Glu-375. Zn(2+) contacts are provided by His-378 and Glu-398. 9 residues coordinate Ca(2+): Glu-409, Asn-415, Asp-417, Glu-419, Glu-422, Tyr-425, Thr-426, Val-429, and Asp-432. The active-site Proton donor is His-463.

The protein belongs to the peptidase M4 family. The cofactor is Ca(2+). Zn(2+) serves as cofactor.

The protein resides in the secreted. Its casein hydrolytic activity is inhibited almost completely by a chelating agent (EDTA), whereas neither diisopropyl fluorophosphate nor phenylmethylsulfonyl fluoride inhibit the proteolytic activity in vitro. Functionally, extracellular zinc metalloprotease. This is Thermostable neutral protease NprT (nprT) from Geobacillus stearothermophilus (Bacillus stearothermophilus).